Reading from the N-terminus, the 215-residue chain is Uridine kinase (215 aa).

Residue Gly-16 to Ser-23 coordinates ATP.

Belongs to the uridine kinase family.

Its subcellular location is the cytoplasm. The catalysed reaction is uridine + ATP = UMP + ADP + H(+). It carries out the reaction cytidine + ATP = CMP + ADP + H(+). The protein operates within pyrimidine metabolism; CTP biosynthesis via salvage pathway; CTP from cytidine: step 1/3. Its pathway is pyrimidine metabolism; UMP biosynthesis via salvage pathway; UMP from uridine: step 1/1. The protein is Uridine kinase of Aliivibrio salmonicida (strain LFI1238) (Vibrio salmonicida (strain LFI1238)).